The primary structure comprises 122 residues: Large ribosomal subunit protein uL14 (122 aa).

The protein belongs to the universal ribosomal protein uL14 family. As to quaternary structure, part of the 50S ribosomal subunit. Forms a cluster with proteins L3 and L19. In the 70S ribosome, L14 and L19 interact and together make contacts with the 16S rRNA in bridges B5 and B8.

Functionally, binds to 23S rRNA. Forms part of two intersubunit bridges in the 70S ribosome. The chain is Large ribosomal subunit protein uL14 from Parvibaculum lavamentivorans (strain DS-1 / DSM 13023 / NCIMB 13966).